The sequence spans 157 residues: Dihydrofolate reductase type 6 (157 aa).

A DHFR domain is found at 2 to 156 (KISLMAAVSE…IDYTYQIWAK (155 aa)).

It belongs to the dihydrofolate reductase family. As to quaternary structure, homodimer.

It carries out the reaction (6S)-5,6,7,8-tetrahydrofolate + NADP(+) = 7,8-dihydrofolate + NADPH + H(+). It functions in the pathway cofactor biosynthesis; tetrahydrofolate biosynthesis; 5,6,7,8-tetrahydrofolate from 7,8-dihydrofolate: step 1/1. Its function is as follows. Key enzyme in folate metabolism. Catalyzes an essential reaction for de novo glycine and purine synthesis, and for DNA precursor synthesis. The protein is Dihydrofolate reductase type 6 (dhfrVI) of Proteus mirabilis.